A 350-amino-acid chain; its full sequence is Phosphatidylinositol transfer protein PDR17 (350 aa).

Residues 139–297 (KVAVENETGK…LYNGLLDFKY (159 aa)) form the CRAL-TRIO domain.

As to quaternary structure, interacts with phosphatidylserine decarboxylase PSD2. Also interacts with PBI1.

It is found in the cytoplasm. The protein resides in the microsome. It catalyses the reaction a 1,2-diacyl-sn-glycero-3-phospho-(1D-myo-inositol)(in) = a 1,2-diacyl-sn-glycero-3-phospho-(1D-myo-inositol)(out). Functionally, has phosphatidylinositol transfer activity. Involved in the regulation of the phospholipid composition of plasma- and endomembranes. Altering plasma membrane composition may provide a possible mechanism for multidrug resistance. Contributes to efficient phospholipase D1 activation and phospholipase B1 inhibition in the regulation of phospholipid turnover. Forms a complex with phosphatidylserine decarboxylase PSD2 that seems essential for maintenance of vacuolar phosphatidylethanolamine (PE) levels. Allows interorganelle phosphatidylserine (PtdSer) transport via a process that involves the acceptor membrane complex PDR17-PDS2 that binds to PBI1 which in turn ligates to SCS2 and phosphatidic acid present in the donor membrane, forming a zone of apposition that facilitates PtdSer transfer. The sequence is that of Phosphatidylinositol transfer protein PDR17 from Saccharomyces cerevisiae (strain ATCC 204508 / S288c) (Baker's yeast).